Reading from the N-terminus, the 431-residue chain is Enolase (431 aa).

(2R)-2-phosphoglycerate is bound at residue Gln-167. Glu-209 serves as the catalytic Proton donor. Residues Asp-246, Glu-289, and Asp-316 each coordinate Mg(2+). The (2R)-2-phosphoglycerate site is built by Lys-341, Arg-370, Ser-371, and Lys-392. Lys-341 acts as the Proton acceptor in catalysis.

This sequence belongs to the enolase family. As to quaternary structure, component of the RNA degradosome, a multiprotein complex involved in RNA processing and mRNA degradation. It depends on Mg(2+) as a cofactor.

It localises to the cytoplasm. It is found in the secreted. The protein resides in the cell surface. The catalysed reaction is (2R)-2-phosphoglycerate = phosphoenolpyruvate + H2O. The protein operates within carbohydrate degradation; glycolysis; pyruvate from D-glyceraldehyde 3-phosphate: step 4/5. Its function is as follows. Catalyzes the reversible conversion of 2-phosphoglycerate (2-PG) into phosphoenolpyruvate (PEP). It is essential for the degradation of carbohydrates via glycolysis. This chain is Enolase, found in Shewanella sp. (strain MR-4).